Reading from the N-terminus, the 122-residue chain is Ribosome-binding factor A (122 aa).

The protein belongs to the RbfA family. In terms of assembly, monomer. Binds 30S ribosomal subunits, but not 50S ribosomal subunits or 70S ribosomes.

It localises to the cytoplasm. Its function is as follows. One of several proteins that assist in the late maturation steps of the functional core of the 30S ribosomal subunit. Associates with free 30S ribosomal subunits (but not with 30S subunits that are part of 70S ribosomes or polysomes). Required for efficient processing of 16S rRNA. May interact with the 5'-terminal helix region of 16S rRNA. The sequence is that of Ribosome-binding factor A from Polaromonas naphthalenivorans (strain CJ2).